Reading from the N-terminus, the 234-residue chain is Small ribosomal subunit protein uS2 (234 aa).

The protein belongs to the universal ribosomal protein uS2 family.

The protein is Small ribosomal subunit protein uS2 of Prochlorococcus marinus (strain AS9601).